The following is a 777-amino-acid chain: 1,4-alpha-glucan branching enzyme GlgB (777 aa).

Catalysis depends on Asp408, which acts as the Nucleophile. Glu461 functions as the Proton donor in the catalytic mechanism.

It belongs to the glycosyl hydrolase 13 family. GlgB subfamily. As to quaternary structure, monomer.

The catalysed reaction is Transfers a segment of a (1-&gt;4)-alpha-D-glucan chain to a primary hydroxy group in a similar glucan chain.. It participates in glycan biosynthesis; glycogen biosynthesis. Functionally, catalyzes the formation of the alpha-1,6-glucosidic linkages in glycogen by scission of a 1,4-alpha-linked oligosaccharide from growing alpha-1,4-glucan chains and the subsequent attachment of the oligosaccharide to the alpha-1,6 position. In Actinobacillus pleuropneumoniae serotype 3 (strain JL03), this protein is 1,4-alpha-glucan branching enzyme GlgB.